The chain runs to 916 residues: Calcium homeostasis endoplasmic reticulum protein (916 aa).

At methionine 1 the chain carries N-acetylmethionine. Residues 15-57 form an SURP motif repeat; that stretch reads VIDKLAQFVARNGPEFEKMTMEKQKDNPKFSFLFGGEFYSYYK. Lysine 18 carries the N6-acetyllysine modification. The 141-residue stretch at 149–289 folds into the CID domain; it reads ETQLDMNEFD…QLQSPALGLG (141 aa). 2 disordered regions span residues 336–549 and 601–635; these read QQQQ…RFPP and HPPW…PHIN. Residues 354 to 374 are compositionally biased toward pro residues; that stretch reads TPPPPAPPPAPAPAPAIPPTT. Polar residues predominate over residues 480–501; sequence WNNQPDAAWNSQFEGPWNSQHE. Positions 525–541 are enriched in pro residues; that stretch reads PFPPHQQHPQFNQPPHP. At tyrosine 714 the chain carries Phosphotyrosine. The interval 722–878 is disordered; the sequence is RARRRKGQEK…DPIKGGDVRD (157 aa). Basic residues predominate over residues 739-749; sequence SRSRSKSRGRS. Low complexity predominate over residues 750–766; that stretch reads SSRSNSRSSKSSGSYSR. The segment covering 767–815 has biased composition (basic residues); sequence SRSRSCSRSYSRSRSRSRSRSRSSRSRSRSQSRSRSKSYSPGRRRRSRS. Residues serine 813, serine 815, and serine 817 each carry the phosphoserine modification. Threonine 819 is subject to Phosphothreonine. Serine 828 bears the Phosphoserine mark. The G-patch domain occupies 841 to 891; sequence EENKGHQMLVKMGWSGSGGLGAKEQGIQDPIKGGDVRDKWDQYKGVGVALD. A Glycyl lysine isopeptide (Lys-Gly) (interchain with G-Cter in SUMO2) cross-link involves residue lysine 844. 2 positions are modified to phosphoserine: serine 855 and serine 857. A Glycyl lysine isopeptide (Lys-Gly) (interchain with G-Cter in SUMO2) cross-link involves residue lysine 872. Position 879 is an N6-acetyllysine (lysine 879). Residue serine 904 is modified to Phosphoserine.

In terms of tissue distribution, expressed in brain, placenta, lung, liver, kidney, pancreas, cardiac and skeletal muscle, and in cultured HEL and Dami cells.

It is found in the cytoplasm. Its subcellular location is the perinuclear region. The protein localises to the endoplasmic reticulum. Its function is as follows. Involved in calcium homeostasis, growth and proliferation. The protein is Calcium homeostasis endoplasmic reticulum protein of Homo sapiens (Human).